Reading from the N-terminus, the 130-residue chain is Histone H2A type 1-D (130 aa).

A disordered region spans residues methionine 1 to alanine 22. Serine 2 is modified (N-acetylserine). A Phosphoserine; by RPS6KA5 modification is found at serine 2. Arginine 4 is subject to Citrulline; alternate. Position 4 is a symmetric dimethylarginine; by PRMT5; alternate (arginine 4). An N6-(2-hydroxyisobutyryl)lysine; alternate mark is found at lysine 6 and lysine 10. Lysine 6 is modified (N6-acetyllysine; alternate). A compositionally biased stretch (basic residues) spans glutamine 7 to serine 19. 2 positions are modified to N6-(beta-hydroxybutyryl)lysine; alternate: lysine 10 and lysine 14. An N6-lactoyllysine; alternate modification is found at lysine 10. N6-succinyllysine; alternate is present on lysine 10. Lysine 14 participates in a covalent cross-link: Glycyl lysine isopeptide (Lys-Gly) (interchain with G-Cter in ubiquitin); alternate. Lysine 16 participates in a covalent cross-link: Glycyl lysine isopeptide (Lys-Gly) (interchain with G-Cter in ubiquitin). Lysine 37 is modified (N6-(2-hydroxyisobutyryl)lysine; alternate). Lysine 37 carries the N6-(beta-hydroxybutyryl)lysine; alternate modification. Residue lysine 37 is modified to N6-crotonyllysine; alternate. N6-(2-hydroxyisobutyryl)lysine occurs at positions 75 and 76. Lysine 96 is modified (N6-(2-hydroxyisobutyryl)lysine; alternate). Lysine 96 bears the N6-(beta-hydroxybutyryl)lysine; alternate mark. Lysine 96 carries the post-translational modification N6-succinyllysine; alternate. N6-glutaryllysine; alternate is present on lysine 96. At lysine 100 the chain carries N6-glutaryllysine. An N5-methylglutamine modification is found at glutamine 105. N6-(2-hydroxyisobutyryl)lysine; alternate is present on lysine 119. An N6-(beta-hydroxybutyryl)lysine; alternate modification is found at lysine 119. Residues lysine 119 and lysine 120 each carry the N6-crotonyllysine; alternate modification. Lysine 119 and lysine 120 each carry N6-glutaryllysine; alternate. Residue lysine 120 forms a Glycyl lysine isopeptide (Lys-Gly) (interchain with G-Cter in ubiquitin); alternate linkage. Residue threonine 121 is modified to Phosphothreonine; by DCAF1. Lysine 126 is modified (N6-crotonyllysine; alternate). N6-glutaryllysine; alternate is present on lysine 126.

Belongs to the histone H2A family. In terms of assembly, the nucleosome is a histone octamer containing two molecules each of H2A, H2B, H3 and H4 assembled in one H3-H4 heterotetramer and two H2A-H2B heterodimers. The octamer wraps approximately 147 bp of DNA. In terms of processing, deiminated on Arg-4 in granulocytes upon calcium entry. Monoubiquitination of Lys-120 (H2AK119Ub) by RING1, TRIM37 and RNF2/RING2 complex gives a specific tag for epigenetic transcriptional repression and participates in X chromosome inactivation of female mammals. It is involved in the initiation of both imprinted and random X inactivation. Ubiquitinated H2A is enriched in inactive X chromosome chromatin. Ubiquitination of H2A functions downstream of methylation of 'Lys-27' of histone H3 (H3K27me). H2AK119Ub by RNF2/RING2 can also be induced by ultraviolet and may be involved in DNA repair. Monoubiquitination of Lys-120 (H2AK119Ub) by TRIM37 may promote transformation of cells in a number of breast cancers. Following DNA double-strand breaks (DSBs), it is ubiquitinated through 'Lys-63' linkage of ubiquitin moieties by the E2 ligase UBE2N and the E3 ligases RNF8 and RNF168, leading to the recruitment of repair proteins to sites of DNA damage. Ubiquitination at Lys-14 and Lys-16 (H2AK13Ub and H2AK15Ub, respectively) in response to DNA damage is initiated by RNF168 that mediates monoubiquitination at these 2 sites, and 'Lys-63'-linked ubiquitin are then conjugated to monoubiquitin; RNF8 is able to extend 'Lys-63'-linked ubiquitin chains in vitro. Deubiquitinated by USP51 at Lys-14 and Lys-16 (H2AK13Ub and H2AK15Ub, respectively) after damaged DNA is repaired. H2AK119Ub and ionizing radiation-induced 'Lys-63'-linked ubiquitination (H2AK13Ub and H2AK15Ub) are distinct events. Post-translationally, phosphorylation on Ser-2 (H2AS1ph) is enhanced during mitosis. Phosphorylation on Ser-2 by RPS6KA5/MSK1 directly represses transcription. Acetylation of H3 inhibits Ser-2 phosphorylation by RPS6KA5/MSK1. Phosphorylation at Thr-121 (H2AT120ph) by DCAF1 is present in the regulatory region of many tumor suppresor genes and down-regulates their transcription. In terms of processing, glutamine methylation at Gln-105 (H2AQ104me) by FBL is specifically dedicated to polymerase I. It is present at 35S ribosomal DNA locus and impairs binding of the FACT complex. Symmetric dimethylation on Arg-4 by the PRDM1/PRMT5 complex may play a crucial role in the germ-cell lineage. Post-translationally, crotonylation (Kcr) is specifically present in male germ cells and marks testis-specific genes in post-meiotic cells, including X-linked genes that escape sex chromosome inactivation in haploid cells. Crotonylation marks active promoters and enhancers and confers resistance to transcriptional repressors. It is also associated with post-meiotically activated genes on autosomes. In terms of processing, lactylated in macrophages by EP300/P300 by using lactoyl-CoA directly derived from endogenous or exogenous lactate, leading to stimulates gene transcription.

The protein localises to the nucleus. Its subcellular location is the chromosome. In terms of biological role, core component of nucleosome. Nucleosomes wrap and compact DNA into chromatin, limiting DNA accessibility to the cellular machineries which require DNA as a template. Histones thereby play a central role in transcription regulation, DNA repair, DNA replication and chromosomal stability. DNA accessibility is regulated via a complex set of post-translational modifications of histones, also called histone code, and nucleosome remodeling. This is Histone H2A type 1-D from Homo sapiens (Human).